A 188-amino-acid polypeptide reads, in one-letter code: Ion-translocating oxidoreductase complex subunit B (188 aa).

Positions Met1–Ala26 are hydrophobic. Residues Gln32–Leu90 enclose the 4Fe-4S domain. Residues Cys49, Cys52, Cys57, Cys73, Cys113, Cys116, Cys119, Cys123, Cys143, Cys146, Cys149, and Cys153 each coordinate [4Fe-4S] cluster. 4Fe-4S ferredoxin-type domains follow at residues Arg104–Arg133 and Leu134–Ile163.

The protein belongs to the 4Fe4S bacterial-type ferredoxin family. RnfB subfamily. In terms of assembly, the complex is composed of six subunits: RnfA, RnfB, RnfC, RnfD, RnfE and RnfG. Requires [4Fe-4S] cluster as cofactor.

It is found in the cell inner membrane. Part of a membrane-bound complex that couples electron transfer with translocation of ions across the membrane. This chain is Ion-translocating oxidoreductase complex subunit B, found in Pseudomonas aeruginosa (strain LESB58).